Reading from the N-terminus, the 434-residue chain is DENN domain-containing protein 11 (434 aa).

Positions 1–29 (MARRTDRAPLLDWAEGPGVSPAPETEQGE) are disordered. One can recognise a uDENN domain in the interval 1 to 168 (MARRTDRAPL…QLEIPGHYTP (168 aa)). In terms of domain architecture, cDENN spans 194 to 341 (LPPVHKHLYP…VNSADKEKYQ (148 aa)). One can recognise a dDENN domain in the interval 343–434 (LNDQRQLLMY…MLVIDNPCCP (92 aa)).

It belongs to the DENND11 family.

In terms of biological role, probable guanine nucleotide exchange factor (GEF). May promote the exchange of GDP to GTP, converting inactive GDP-bound small GTPases into their active GTP-bound form. The chain is DENN domain-containing protein 11 (dennd11) from Xenopus laevis (African clawed frog).